Consider the following 598-residue polypeptide: Mitogen-activated protein kinase 19 (598 aa).

The region spanning 25 to 316 (YRILEVIGKG…AAEALADPYF (292 aa)) is the Protein kinase domain. ATP is bound by residues 31–39 (IGKGSYGVV) and Lys54. Residue Asp151 is the Proton acceptor of the active site. Residue Thr187 is modified to Phosphothreonine. Positions 187–189 (TDY) match the TXY motif. Tyr189 carries the phosphotyrosine modification. A Phosphothreonine modification is found at Thr192. Residues 396–486 (GKSGPVIPPD…VTYENDRNLK (91 aa)) are disordered. Residues 414 to 425 (SAVHSSAVNSNA) show a composition bias toward low complexity.

Belongs to the protein kinase superfamily. CMGC Ser/Thr protein kinase family. MAP kinase subfamily. Dually phosphorylated on Thr-187 and Tyr-189, which activates the enzyme.

It catalyses the reaction L-seryl-[protein] + ATP = O-phospho-L-seryl-[protein] + ADP + H(+). The enzyme catalyses L-threonyl-[protein] + ATP = O-phospho-L-threonyl-[protein] + ADP + H(+). Activated by threonine and tyrosine phosphorylation. This is Mitogen-activated protein kinase 19 (MPK19) from Arabidopsis thaliana (Mouse-ear cress).